The chain runs to 140 residues: Nucleoside diphosphate kinase (140 aa).

ATP is bound by residues K11, F59, R87, T93, R104, and N114. H117 serves as the catalytic Pros-phosphohistidine intermediate.

Belongs to the NDK family. In terms of assembly, homotetramer. Mg(2+) serves as cofactor.

The protein localises to the cytoplasm. It carries out the reaction a 2'-deoxyribonucleoside 5'-diphosphate + ATP = a 2'-deoxyribonucleoside 5'-triphosphate + ADP. The enzyme catalyses a ribonucleoside 5'-diphosphate + ATP = a ribonucleoside 5'-triphosphate + ADP. In terms of biological role, major role in the synthesis of nucleoside triphosphates other than ATP. The ATP gamma phosphate is transferred to the NDP beta phosphate via a ping-pong mechanism, using a phosphorylated active-site intermediate. This is Nucleoside diphosphate kinase from Azorhizobium caulinodans (strain ATCC 43989 / DSM 5975 / JCM 20966 / LMG 6465 / NBRC 14845 / NCIMB 13405 / ORS 571).